We begin with the raw amino-acid sequence, 332 residues long: UPF0194 membrane protein YbhG (332 aa).

Positions 1 to 26 (MMKKPVVIELAVVVLAAVVAGGYWWY) are cleaved as a signal peptide. Residues 108–209 (EEIAQAAAAV…LNLQDSTLIA (102 aa)) are a coiled coil.

Belongs to the UPF0194 family.

The protein localises to the periplasm. The protein is UPF0194 membrane protein YbhG (ybhG) of Shigella sonnei (strain Ss046).